The primary structure comprises 329 residues: MDSEIAADYSPMLIIYKSGRIERLVGETTVPPSSNPQNGVVSKDVVYSPDNNLSLRIYLPEKAATAETEASVKLPLLVYFHGGGFLVETAFSPTYHTFLTAAVSASDCVAVSVDYRRAPEHPIPTSYDDSWTALKWVFSHIAGSGSEDWLNKHADFSKVFLAGDSAGANITHHMTMKAAKDKLSPESLNESGISGIILVHPYFWSKTPVDDKETTDVAIRTWIESVWTLASPNSKDGSDDPFINVVQSESVDLSGLGCGKVLVMVAEKDALVRQGWGYWEKLGKSRWNGEVLDVVETKGEGHVFHLRDPNSEKAHELVHRFAGFIKGDK.

Met-1 carries the N-acetylmethionine modification. The Involved in the stabilization of the negatively charged intermediate by the formation of the oxyanion hole motif lies at 81-83; the sequence is HGG. Active-site residues include Ser-165, Asp-269, and His-302.

It belongs to the 'GDXG' lipolytic enzyme family. Expressed in flowers.

It catalyses the reaction a carboxylic ester + H2O = an alcohol + a carboxylate + H(+). Functionally, carboxylesterase acting on esters with varying acyl chain length. In Arabidopsis thaliana (Mouse-ear cress), this protein is Probable carboxylesterase 13 (CXE13).